The primary structure comprises 118 residues: Large ribosomal subunit protein bL20 (118 aa).

It belongs to the bacterial ribosomal protein bL20 family.

Functionally, binds directly to 23S ribosomal RNA and is necessary for the in vitro assembly process of the 50S ribosomal subunit. It is not involved in the protein synthesizing functions of that subunit. The sequence is that of Large ribosomal subunit protein bL20 from Trichormus variabilis (strain ATCC 29413 / PCC 7937) (Anabaena variabilis).